Here is a 955-residue protein sequence, read N- to C-terminus: Isoleucine--tRNA ligase (955 aa).

The short motif at 60 to 70 (PYANGDLHIGH) is the 'HIGH' region element. L-isoleucyl-5'-AMP is bound at residue E563. The short motif at 604–608 (KMSKS) is the 'KMSKS' region element. Residue K607 coordinates ATP. Residues C926, C929, C946, and C949 each contribute to the Zn(2+) site.

This sequence belongs to the class-I aminoacyl-tRNA synthetase family. IleS type 1 subfamily. Monomer. It depends on Zn(2+) as a cofactor.

Its subcellular location is the cytoplasm. It carries out the reaction tRNA(Ile) + L-isoleucine + ATP = L-isoleucyl-tRNA(Ile) + AMP + diphosphate. Its function is as follows. Catalyzes the attachment of isoleucine to tRNA(Ile). As IleRS can inadvertently accommodate and process structurally similar amino acids such as valine, to avoid such errors it has two additional distinct tRNA(Ile)-dependent editing activities. One activity is designated as 'pretransfer' editing and involves the hydrolysis of activated Val-AMP. The other activity is designated 'posttransfer' editing and involves deacylation of mischarged Val-tRNA(Ile). The chain is Isoleucine--tRNA ligase from Cyanothece sp. (strain PCC 7425 / ATCC 29141).